The sequence spans 757 residues: Protein Lines homolog 1 (757 aa).

At Ser-635 the chain carries Phosphoserine.

The protein belongs to the protein lines family. As to expression, expressed in adult testis, prostate, prostate, spleen, thymus, skeletal muscle, fetal kidney and brain.

This Homo sapiens (Human) protein is Protein Lines homolog 1.